The chain runs to 145 residues: uncharacterized protein (145 aa).

Residues F46 to F66 traverse the membrane as a helical segment.

The protein resides in the membrane. This is an uncharacterized protein from Saccharomyces cerevisiae (strain ATCC 204508 / S288c) (Baker's yeast).